A 948-amino-acid polypeptide reads, in one-letter code: Hexagonally packed intermediate-layer surface protein (948 aa).

The N-terminal stretch at methionine 1 to alanine 17 is a signal peptide. Disulfide bonds link cysteine 168–cysteine 187 and cysteine 554–cysteine 666.

In terms of processing, glycosylated. Contains tightly bound reducing sugars (six per polypeptide chain) and fatty acids (covalently bound and located in the N-terminal region).

It is found in the secreted. The protein resides in the cell wall. It localises to the S-layer. Its function is as follows. Shape maintenance, possible protection from noxious enzymes or exogenous and unsettling DNA, and may mediate homotypic cell-cell contacts. The chain is Hexagonally packed intermediate-layer surface protein (hpi) from Deinococcus radiodurans (strain ATCC 13939 / DSM 20539 / JCM 16871 / CCUG 27074 / LMG 4051 / NBRC 15346 / NCIMB 9279 / VKM B-1422 / R1).